Here is a 450-residue protein sequence, read N- to C-terminus: Sorting nexin-4 (450 aa).

The residue at position 1 (Met1) is an N-acetylmethionine. Residues 1-46 (MEQAPPDPERQLQPAPLEPLGSPDAGLGAAVGKEAEGAGEESSGVD) are disordered. Ser22 is subject to Phosphoserine. A PX domain is found at 61–187 (SVSEAEKRTG…YLFLTQEGNW (127 aa)). A 1,2-diacyl-sn-glycero-3-phospho-(1D-myo-inositol-3-phosphate)-binding residues include Arg106, Ser108, Lys132, and Arg154.

This sequence belongs to the sorting nexin family. Heterodimer; heterodimerizes with SNX7 or SNX30. Interacts with WWC1/KIBRA. Identified in a complex with WWC1/KIBRA and dynein components DYNLL1 and DYNC1I2. Interacts with BIN1.

The protein localises to the early endosome membrane. Involved in the regulation of endocytosis and in several stages of intracellular trafficking. Plays a role in recycling endocytosed transferrin receptor and prevent its degradation. Involved in autophagosome assembly by regulating trafficking and recycling of phospholipid scramblase ATG9A. This is Sorting nexin-4 from Homo sapiens (Human).